We begin with the raw amino-acid sequence, 167 residues long: Centrin-3 (167 aa).

EF-hand domains lie at 25–60 (EQKQEIKDAFELFDTDKDQAIDYHELKVAMRALGFD), 61–96 (VKKADVLKILKDYDREATGKITFEDFNEVVTDWILE), 98–133 (DPHEEILKAFKLFDDDDSGKISLRNLRRVARELGEN), and 134–167 (MSDEELRAMIEEFDKDGDGEINQEEFIAIMTGDI). Residues Asp38, Asp40, Asp42, and Glu49 each contribute to the Ca(2+) site. Ser135 bears the Phosphoserine mark. The Ca(2+) site is built by Asp147, Asp149, Asp151, Glu153, and Glu158.

Belongs to the centrin family. As to quaternary structure, monomer. Component of the TREX-2 complex (transcription and export complex 2), composed of at least ENY2, GANP, PCID2, SEM1, and either centrin CETN2 or CETN3. Interacts with USP49.

The protein localises to the cytoplasm. The protein resides in the cytoskeleton. Its subcellular location is the microtubule organizing center. It is found in the centrosome. It localises to the nucleus. The protein localises to the nucleolus. The protein resides in the nucleus envelope. Its subcellular location is the nuclear pore complex. It is found in the centriole. Functionally, plays a fundamental role in microtubule-organizing center structure and function. Its function is as follows. As a component of the TREX-2 complex, involved in the export of mRNAs to the cytoplasm through the nuclear pores. This chain is Centrin-3 (Cetn3), found in Mus musculus (Mouse).